A 181-amino-acid polypeptide reads, in one-letter code: Probable toxin TacT (181 aa).

Belongs to the acetyltransferase family. As to quaternary structure, forms a complex with cognate antitoxin TacA.

Functionally, probable toxin component of a type II toxin-antitoxin (TA) system. Might acetylate tRNA and inhibit translation. Should be neutralized by cognate antitoxin TacA (y4aR). This is Probable toxin TacT from Sinorhizobium fredii (strain NBRC 101917 / NGR234).